We begin with the raw amino-acid sequence, 161 residues long: Lincosamide resistance protein (161 aa).

The protein is Lincosamide resistance protein (linA) of Staphylococcus haemolyticus.